A 256-amino-acid chain; its full sequence is Type III pantothenate kinase (256 aa).

6 to 13 (DIGNTHIV) provides a ligand contact to ATP. Position 109-112 (109-112 (GADR)) interacts with substrate. Asp111 serves as the catalytic Proton acceptor. Position 132 (Asp132) interacts with K(+). Residue Thr135 participates in ATP binding. Substrate is bound at residue Thr186.

Belongs to the type III pantothenate kinase family. Homodimer. NH4(+) serves as cofactor. The cofactor is K(+).

It is found in the cytoplasm. The catalysed reaction is (R)-pantothenate + ATP = (R)-4'-phosphopantothenate + ADP + H(+). It participates in cofactor biosynthesis; coenzyme A biosynthesis; CoA from (R)-pantothenate: step 1/5. Its function is as follows. Catalyzes the phosphorylation of pantothenate (Pan), the first step in CoA biosynthesis. The protein is Type III pantothenate kinase of Fusobacterium nucleatum subsp. nucleatum (strain ATCC 25586 / DSM 15643 / BCRC 10681 / CIP 101130 / JCM 8532 / KCTC 2640 / LMG 13131 / VPI 4355).